A 172-amino-acid chain; its full sequence is RNA silencing suppressor p19 (172 aa).

Disordered regions lie at residues methionine 1 to glycine 38 and valine 152 to glutamate 172. Composition is skewed to basic and acidic residues over residues aspartate 9–aspartate 20 and glycine 159–glutamate 172.

Belongs to the tombusvirus protein p19 family. In terms of assembly, homodimer.

In terms of biological role, viral suppressor of RNA silencing which binds specifically to silencing RNAs (siRNAs). Acts as a molecular caliper to specifically select siRNAs based on the length of the duplex region of the RNA. The chain is RNA silencing suppressor p19 from Havel river virus (HaRV).